Reading from the N-terminus, the 459-residue chain is Cyclooctat-9-en-7-ol 5-monooxygenase (459 aa).

The tract at residues 1-27 (MRERGPVTPAKSSAPPERPWTTGTAPG) is disordered. Residue cysteine 408 coordinates heme.

It belongs to the cytochrome P450 family. The cofactor is heme.

It carries out the reaction cyclooctat-9-en-7-ol + AH2 + O2 = cyclooctat-9-ene-5,7-diol + A + H2O. Involved in the biosynthesis of cyclooctatin, a potent inhibitor of lysophospholipase. Catalyzes the stereospecific hydroxylation of cyclooctat-9-en-7-ol to form cyclooctat-9-ene-5,7-diol. This Streptomyces melanosporofaciens protein is Cyclooctat-9-en-7-ol 5-monooxygenase.